Reading from the N-terminus, the 23-residue chain is Septenin 2a (23 aa).

Expressed in skin glands.

Its subcellular location is the secreted. Its function is as follows. May act as an antimicrobial peptide. The polypeptide is Septenin 2a (Osteopilus septentrionalis (Cuban treefrog)).